The primary structure comprises 179 residues: ATP synthase subunit b, chloroplastic (179 aa).

A helical membrane pass occupies residues 28–46 (IINIAALVGILIYAGRDFL).

The protein belongs to the ATPase B chain family. In terms of assembly, F-type ATPases have 2 components, F(1) - the catalytic core - and F(0) - the membrane proton channel. F(1) has five subunits: alpha(3), beta(3), gamma(1), delta(1), epsilon(1). F(0) has four main subunits: a(1), b(1), b'(1) and c(10-14). The alpha and beta chains form an alternating ring which encloses part of the gamma chain. F(1) is attached to F(0) by a central stalk formed by the gamma and epsilon chains, while a peripheral stalk is formed by the delta, b and b' chains.

Its subcellular location is the plastid. It localises to the chloroplast thylakoid membrane. F(1)F(0) ATP synthase produces ATP from ADP in the presence of a proton or sodium gradient. F-type ATPases consist of two structural domains, F(1) containing the extramembraneous catalytic core and F(0) containing the membrane proton channel, linked together by a central stalk and a peripheral stalk. During catalysis, ATP synthesis in the catalytic domain of F(1) is coupled via a rotary mechanism of the central stalk subunits to proton translocation. In terms of biological role, component of the F(0) channel, it forms part of the peripheral stalk, linking F(1) to F(0). This Trieres chinensis (Marine centric diatom) protein is ATP synthase subunit b, chloroplastic.